We begin with the raw amino-acid sequence, 475 residues long: Gamma-aminobutyric acid receptor subunit gamma-2 (475 aa).

The signal sequence occupies residues 1–39 (MSSPNIWSTGSSVYSTPVFSQKMTLWILLLLSLYPGLTR). Residues 41–275 (KSDDDYEDYA…FDLSRRMGYF (235 aa)) lie on the Extracellular side of the membrane. N-linked (GlcNAc...) asparagine glycosylation is found at asparagine 52 and asparagine 129. Cysteine 190 and cysteine 204 are joined by a disulfide. The N-linked (GlcNAc...) asparagine glycan is linked to asparagine 247. The chain crosses the membrane as a helical span at residues 276–296 (TIQTYIPCTLIVVLSWVSFWI). Topologically, residues 297–302 (NKDAVP) are cytoplasmic. Residues 303–322 (ARTSLGITTVLTMTTLSTIA) form a helical membrane-spanning segment. Residues 323–334 (RKSLPKVSYVTA) lie on the Extracellular side of the membrane. A helical transmembrane segment spans residues 335-359 (MDLFVSVCFIFVFSALVEYGTLHYF). At 360–451 (VSNRKPSKDK…IHIRIAKMDS (92 aa)) the chain is on the cytoplasmic side. Position 382 is a phosphoserine; by PKC (serine 382). The helical transmembrane segment at 452 to 472 (YARIFFPTAFCLFNLVYWVSY) threads the bilayer. Residues 473–475 (LYL) are Extracellular-facing.

Belongs to the ligand-gated ion channel (TC 1.A.9) family. Gamma-aminobutyric acid receptor (TC 1.A.9.5) subfamily. GABRG2 sub-subfamily. Heteropentamer, formed by a combination of alpha (GABRA1-6), beta (GABRB1-3), gamma (GABRG1-3), delta (GABRD), epsilon (GABRE), rho (GABRR1-3), pi (GABRP) and theta (GABRQ) chains, each subunit exhibiting distinct physiological and pharmacological properties. Interacts with GABARAP. Interacts with KIF21B. Identified in a complex of 720 kDa composed of LHFPL4, NLGN2, GABRA1, GABRB2, GABRG2 and GABRB3. Interacts with LHFPL4. Interacts with SHISA7; interaction leads to the regulation of GABA(A) receptor trafficking, channel deactivation kinetics and pharmacology. Palmitoylated by ZDHHC3/GODZ; required for the accumulation of GABA(A) receptors at the postsynaptic membrane of inhibitory GABAergic synapses. Post-translationally, glycosylated.

Its subcellular location is the postsynaptic cell membrane. The protein resides in the cell membrane. It is found in the cell projection. It localises to the dendrite. The protein localises to the cytoplasmic vesicle membrane. It carries out the reaction chloride(in) = chloride(out). Allosterically activated by benzodiazepines. Activated by pentobarbital. Inhibited by the antagonist bicuculline. Inhibited by zinc ions. Potentiated by histamine. Its function is as follows. Gamma subunit of the heteropentameric ligand-gated chloride channel gated by gamma-aminobutyric acid (GABA), a major inhibitory neurotransmitter in the brain. GABA-gated chloride channels, also named GABA(A) receptors (GABAAR), consist of five subunits arranged around a central pore and contain GABA active binding site(s) located at the alpha and beta subunit interface(s). When activated by GABA, GABAARs selectively allow the flow of chloride anions across the cell membrane down their electrochemical gradient. Gamma-2/GABRG2-containing GABAARs are found at both synaptic and extrasynaptic sites. Chloride influx into the postsynaptic neuron following GABAAR opening decreases the neuron ability to generate a new action potential, thereby reducing nerve transmission. GABAARs containing alpha-1 and beta-2 or -3 subunits exhibit synaptogenic activity; the gamma-2 subunit being necessary but not sufficient to induce rapid synaptic contacts formation. Extrasynaptic gamma-2-containing receptors contribute to the tonic GABAergic inhibition. GABAARs function also as histamine receptor where histamine binds at the interface of two neighboring beta subunits and potentiates GABA response in a gamma-2 subunit-controlled manner. In Bos taurus (Bovine), this protein is Gamma-aminobutyric acid receptor subunit gamma-2 (GABRG2).